Reading from the N-terminus, the 196-residue chain is Putative HTH-type transcriptional regulator in exeN 3'region (196 aa).

The HTH luxR-type domain maps to 120–185 (ASVGGDRLTR…ELFNLFLNHL (66 aa)). Residues 144–163 (TEAIAAALGIGNGTVKNHRK) constitute a DNA-binding region (H-T-H motif).

The polypeptide is Putative HTH-type transcriptional regulator in exeN 3'region (Aeromonas salmonicida).